Consider the following 230-residue polypeptide: Potassium/proton antiporter CemA (230 aa).

The next 4 membrane-spanning stretches (helical) occupy residues 7 to 27 (LPSFLYLVFIVLLPWGVSFSF), 106 to 126 (IILHFSTNIICLAILSGSFFL), 145 to 165 (LNDSVKAFFILLVTDFFVGFH), and 181 to 201 (LGWVPNELIFTIFVCSFPVIL).

It belongs to the CemA family.

The protein localises to the plastid. The protein resides in the chloroplast inner membrane. The catalysed reaction is K(+)(in) + H(+)(out) = K(+)(out) + H(+)(in). In terms of biological role, contributes to K(+)/H(+) antiport activity by supporting proton efflux to control proton extrusion and homeostasis in chloroplasts in a light-dependent manner to modulate photosynthesis. Prevents excessive induction of non-photochemical quenching (NPQ) under continuous-light conditions. Indirectly promotes efficient inorganic carbon uptake into chloroplasts. The sequence is that of Potassium/proton antiporter CemA from Oryza nivara (Indian wild rice).